The sequence spans 964 residues: Glycine dehydrogenase (decarboxylating) (964 aa).

A compositionally biased stretch (polar residues) spans 1 to 11 (MNSTLQNQTKT). Residues 1 to 21 (MNSTLQNQTKTNLEKVGTDPL) form a disordered region. K713 carries the N6-(pyridoxal phosphate)lysine modification.

The protein belongs to the GcvP family. In terms of assembly, the glycine cleavage system is composed of four proteins: P, T, L and H. It depends on pyridoxal 5'-phosphate as a cofactor.

The enzyme catalyses N(6)-[(R)-lipoyl]-L-lysyl-[glycine-cleavage complex H protein] + glycine + H(+) = N(6)-[(R)-S(8)-aminomethyldihydrolipoyl]-L-lysyl-[glycine-cleavage complex H protein] + CO2. Its function is as follows. The glycine cleavage system catalyzes the degradation of glycine. The P protein binds the alpha-amino group of glycine through its pyridoxal phosphate cofactor; CO(2) is released and the remaining methylamine moiety is then transferred to the lipoamide cofactor of the H protein. The chain is Glycine dehydrogenase (decarboxylating) from Leptospira interrogans serogroup Icterohaemorrhagiae serovar Lai (strain 56601).